Reading from the N-terminus, the 349-residue chain is DNA polymerase IV (349 aa).

One can recognise a UmuC domain in the interval 7–188 (IIHIDMDYFF…LPVKKLFGVG (182 aa)). Mg(2+)-binding residues include Asp-11 and Asp-106. Glu-107 is a catalytic residue.

This sequence belongs to the DNA polymerase type-Y family. As to quaternary structure, monomer. The cofactor is Mg(2+).

The protein localises to the cytoplasm. It carries out the reaction DNA(n) + a 2'-deoxyribonucleoside 5'-triphosphate = DNA(n+1) + diphosphate. Its function is as follows. Poorly processive, error-prone DNA polymerase involved in untargeted mutagenesis. Copies undamaged DNA at stalled replication forks, which arise in vivo from mismatched or misaligned primer ends. These misaligned primers can be extended by PolIV. Exhibits no 3'-5' exonuclease (proofreading) activity. May be involved in translesional synthesis, in conjunction with the beta clamp from PolIII. The protein is DNA polymerase IV of Francisella tularensis subsp. holarctica (strain FTNF002-00 / FTA).